Consider the following 135-residue polypeptide: Galectin-1 (135 aa).

Ala2 is subject to N-acetylalanine. One can recognise a Galectin domain in the interval 4–135 (GLVASNLNLK…DFKIKCVAFD (132 aa)). An N6-acetyllysine mark is found at Lys13 and Lys29. Residue Ser30 is modified to Phosphoserine; by FAM20C. Residues 45-49 (HFNPR), His53, Asn62, and 69-72 (WGTE) each bind a beta-D-galactoside. At Lys108 the chain carries N6-acetyllysine; alternate. N6-succinyllysine; alternate is present on Lys108. Lys128 carries the post-translational modification N6-acetyllysine.

In terms of assembly, homodimer. Binds LGALS3BP. Interacts with CD2, CD3, CD4, CD6, CD7, CD43, ALCAM and CD45. Interacts with laminin (via poly-N-acetyllactosamine). Interacts with SUSD2. Interacts with cargo receptor TMED10; the interaction mediates the translocation from the cytoplasm into the ERGIC (endoplasmic reticulum-Golgi intermediate compartment) and thereby secretion. Interacts with CD69. As to expression, expressed in placenta, maternal decidua and fetal membranes. Within placenta, expressed in trophoblasts, stromal cells, villous endothelium, syncytiotrophoblast apical membrane and villous stroma. Within fetal membranes, expressed in amnion, chorioamniotic mesenchyma and chorion (at protein level). Expressed in cardiac, smooth, and skeletal muscle, neurons, thymus, kidney and hematopoietic cells.

It is found in the secreted. It localises to the extracellular space. The protein resides in the extracellular matrix. Its subcellular location is the cytoplasm. Functionally, lectin that binds beta-galactoside and a wide array of complex carbohydrates. Plays a role in regulating apoptosis, cell proliferation and cell differentiation. Inhibits CD45 protein phosphatase activity and therefore the dephosphorylation of Lyn kinase. Strong inducer of T-cell apoptosis. Plays a negative role in Th17 cell differentiation via activation of the receptor CD69. This is Galectin-1 from Homo sapiens (Human).